Here is an 873-residue protein sequence, read N- to C-terminus: Alanine--tRNA ligase (873 aa).

Zn(2+) contacts are provided by H562, H566, C666, and H670.

The protein belongs to the class-II aminoacyl-tRNA synthetase family. Zn(2+) is required as a cofactor.

It is found in the cytoplasm. The enzyme catalyses tRNA(Ala) + L-alanine + ATP = L-alanyl-tRNA(Ala) + AMP + diphosphate. In terms of biological role, catalyzes the attachment of alanine to tRNA(Ala) in a two-step reaction: alanine is first activated by ATP to form Ala-AMP and then transferred to the acceptor end of tRNA(Ala). Also edits incorrectly charged Ser-tRNA(Ala) and Gly-tRNA(Ala) via its editing domain. The polypeptide is Alanine--tRNA ligase (Dichelobacter nodosus (strain VCS1703A)).